Here is a 545-residue protein sequence, read N- to C-terminus: T-complex protein 1 subunit gamma (545 aa).

N-acetylmethionine is present on Met-1. Residues 1–24 (MMGHRPVLVLSQNTKRESGRKVQS) are disordered. Position 11 is a phosphoserine (Ser-11). A Glycyl lysine isopeptide (Lys-Gly) (interchain with G-Cter in SUMO2) cross-link involves residue Lys-15. Gly-42 serves as a coordination point for ADP. An ATP-binding site is contributed by Gly-42. Asp-93 contacts Mg(2+). Residues Gly-94, Thr-95, Thr-96, Ser-97, Thr-162, and Lys-163 each coordinate ADP. 3 residues coordinate ATP: Gly-94, Thr-95, and Thr-96. Position 170 is a phosphoserine (Ser-170). An N6-acetyllysine modification is found at Lys-222. Phosphoserine is present on residues Ser-243 and Ser-244. Residue Tyr-247 is modified to Phosphotyrosine. Glycyl lysine isopeptide (Lys-Gly) (interchain with G-Cter in SUMO2) cross-links involve residues Lys-248 and Lys-249. Residue Ser-252 is modified to Phosphoserine. Cys-366 and Cys-372 are joined by a disulfide. A Glycyl lysine isopeptide (Lys-Gly) (interchain with G-Cter in SUMO2) cross-link involves residue Lys-381. Gly-411 is an ADP binding site. Residue Gly-411 coordinates ATP. 2 positions are modified to phosphothreonine: Thr-430 and Thr-459. Gly-482, Glu-483, Glu-497, and Lys-502 together coordinate ADP. ATP is bound at residue Gly-482. Glu-497 serves as a coordination point for ATP. A disordered region spans residues 526–545 (HKKKGDDQSRQGGAPDAGQE).

This sequence belongs to the TCP-1 chaperonin family. As to quaternary structure, component of the chaperonin-containing T-complex (TRiC), a hexadecamer composed of two identical back-to-back stacked rings enclosing a protein folding chamber. Each ring is made up of eight different subunits: TCP1/CCT1, CCT2, CCT3, CCT4, CCT5, CCT6A/CCT6, CCT7, CCT8. Interacts with PACRG. Interacts with DNAAF4. Interacts with DLEC1.

It is found in the cytoplasm. The enzyme catalyses ATP + H2O = ADP + phosphate + H(+). In terms of biological role, component of the chaperonin-containing T-complex (TRiC), a molecular chaperone complex that assists the folding of actin, tubulin and other proteins upon ATP hydrolysis. The TRiC complex mediates the folding of WRAP53/TCAB1, thereby regulating telomere maintenance. As part of the TRiC complex may play a role in the assembly of BBSome, a complex involved in ciliogenesis regulating transports vesicles to the cilia. This is T-complex protein 1 subunit gamma (CCT3) from Homo sapiens (Human).